Consider the following 426-residue polypeptide: Serine--tRNA ligase (426 aa).

L-serine is bound at residue 229 to 231 (TAE). An ATP-binding site is contributed by 260-262 (RSE). Position 283 (E283) interacts with L-serine. Position 347–350 (347–350 (EIAS)) interacts with ATP. S383 contacts L-serine.

Belongs to the class-II aminoacyl-tRNA synthetase family. Type-1 seryl-tRNA synthetase subfamily. In terms of assembly, homodimer. The tRNA molecule binds across the dimer.

It is found in the cytoplasm. The catalysed reaction is tRNA(Ser) + L-serine + ATP = L-seryl-tRNA(Ser) + AMP + diphosphate + H(+). It catalyses the reaction tRNA(Sec) + L-serine + ATP = L-seryl-tRNA(Sec) + AMP + diphosphate + H(+). Its pathway is aminoacyl-tRNA biosynthesis; selenocysteinyl-tRNA(Sec) biosynthesis; L-seryl-tRNA(Sec) from L-serine and tRNA(Sec): step 1/1. Functionally, catalyzes the attachment of serine to tRNA(Ser). Is also able to aminoacylate tRNA(Sec) with serine, to form the misacylated tRNA L-seryl-tRNA(Sec), which will be further converted into selenocysteinyl-tRNA(Sec). This chain is Serine--tRNA ligase, found in Rickettsia bellii (strain OSU 85-389).